A 59-amino-acid polypeptide reads, in one-letter code: UPF0434 protein Shewmr7_2490 (59 aa).

The protein belongs to the UPF0434 family.

This chain is UPF0434 protein Shewmr7_2490, found in Shewanella sp. (strain MR-7).